Reading from the N-terminus, the 177-residue chain is ATP synthase subunit delta (177 aa).

This sequence belongs to the ATPase delta chain family. As to quaternary structure, F-type ATPases have 2 components, F(1) - the catalytic core - and F(0) - the membrane proton channel. F(1) has five subunits: alpha(3), beta(3), gamma(1), delta(1), epsilon(1). F(0) has three main subunits: a(1), b(2) and c(10-14). The alpha and beta chains form an alternating ring which encloses part of the gamma chain. F(1) is attached to F(0) by a central stalk formed by the gamma and epsilon chains, while a peripheral stalk is formed by the delta and b chains.

It localises to the cell inner membrane. Functionally, f(1)F(0) ATP synthase produces ATP from ADP in the presence of a proton or sodium gradient. F-type ATPases consist of two structural domains, F(1) containing the extramembraneous catalytic core and F(0) containing the membrane proton channel, linked together by a central stalk and a peripheral stalk. During catalysis, ATP synthesis in the catalytic domain of F(1) is coupled via a rotary mechanism of the central stalk subunits to proton translocation. Its function is as follows. This protein is part of the stalk that links CF(0) to CF(1). It either transmits conformational changes from CF(0) to CF(1) or is implicated in proton conduction. In Herminiimonas arsenicoxydans, this protein is ATP synthase subunit delta.